The sequence spans 622 residues: MAMAPSPSLVQVYTSPAAVAVWEWQDGLGTWHPYSATVCSFIEQQFVQQKGQRFGLGSLAHSIPLGQADPSLAPYIIDLPSWTQFRQDTGTMRAVRRHLFPQHSAPGRGVVWEWLSDDGSWTAYEASVCDYLEQQVARGNQLVDLAPLGYNYTVNYTTHTQTNKTSSFCRSVRRQAGPPYPVTTIIAPPGHTGVACSCHQCLSGSRTGPVSGRYRHSMTNLPAYPVPQHPPHRTASVFGTHQAFAPYNKPSLSGARSAPRLNTTNAWGAAPPSLGSQPLYRSSLSHLGPQHLPPGSSTSGAVSASLPSGPSSSPGSVPATVPMQMPKPSRVQQALAGMTSVLMSAIGLPVCLSRAPQPTSPPASRLASKSHGSVKRLRKMSVKGATPKPEPEPEQVIKNYTEELKVPPDEDCIICMEKLSTASGYSDVTDSKAIGSLAVGHLTKCSHAFHLLCLLAMYCNGNKDGSLQCPSCKTIYGEKTGTQPQGKMEVLRFQMSLPGHEDCGTILIVYSIPHGIQGPEHPNPGKPFTARGFPRQCYLPDNAQGRKVLELLKVAWKRRLIFTVGTSSTTGETDTVVWNEIHHKTEMDRNITGHGYPDPNYLQNVLAELAAQGVTEDCLEQQ.

2 WWE domains span residues 8 to 97 and 98 to 174; these read SLVQ…AVRR and HLFP…SVRR. An asymmetric dimethylarginine mark is found at R213, R215, and R233. K249 carries the post-translational modification N6-acetyllysine. 2 disordered regions span residues 249–324 and 355–393; these read KPSL…VPMQ and APQPTSPPASRLASKSHGSVKRLRKMSVKGATPKPEPEP. Residue R256 is modified to Omega-N-methylarginine. The span at 274–285 shows a compositional bias: polar residues; sequence LGSQPLYRSSLS. Residues 299-322 are compositionally biased toward low complexity; sequence SGAVSASLPSGPSSSPGSVPATVP. Position 360 is a phosphoserine (S360). Residues 372-381 are compositionally biased toward basic residues; it reads GSVKRLRKMS. The segment at 412 to 473 adopts an RING-type zinc-finger fold; that stretch reads CIICMEKLST…DGSLQCPSCK (62 aa).

The protein belongs to the Deltex family. In terms of assembly, homodimer. May form a heterodimer with other members of the Deltex family. Interacts with NOTCH1.

The protein resides in the cytoplasm. Its subcellular location is the nucleus. It catalyses the reaction S-ubiquitinyl-[E2 ubiquitin-conjugating enzyme]-L-cysteine + [acceptor protein]-L-lysine = [E2 ubiquitin-conjugating enzyme]-L-cysteine + N(6)-ubiquitinyl-[acceptor protein]-L-lysine.. The protein operates within protein modification; protein ubiquitination. Its function is as follows. Regulator of Notch signaling, a signaling pathway involved in cell-cell communications that regulates a broad spectrum of cell-fate determinations. Probably acts both as a positive and negative regulator of Notch, depending on the developmental and cell context. Mediates the antineural activity of Notch, possibly by inhibiting the transcriptional activation mediated by MATCH1. Functions as a ubiquitin ligase protein in vitro, suggesting that it may regulate the Notch pathway via some ubiquitin ligase activity. This Homo sapiens (Human) protein is Probable E3 ubiquitin-protein ligase DTX2 (DTX2).